Reading from the N-terminus, the 332-residue chain is MNTTGRPVFPLLRRTVLKRCSLCATRCAIVFLCVLLILPFLSCCTSLSRGALPSLISHKERMFWEIRGPQGSVYILGTISVGSEKLLHFQDKILDVFDSASRLYAELGSEDIKNFASVLQRRMLHGMLEQENAAPTLSSLSREELEMLRSTLGDDMHTLSRFEPWVMRVALYQALIAHTKLDSGKNIEAFLYQRAGNRKILGLDSIQKHLNMLSFGNREEQITLLRALIALGKSPADFKGRLGALVRSYLSNDKTALGRVSTELDALVTKDAAGGLHRRYVAEIAASRRAAWAEEFYRLSLQHGITFVFASAGHFCGPESVFDIMRKRRLLQ.

A helical membrane pass occupies residues 27 to 47 (CAIVFLCVLLILPFLSCCTSL).

It localises to the membrane. This is an uncharacterized protein from Treponema pallidum (strain Nichols).